The sequence spans 158 residues: Secreted RxLR effector protein 2 (158 aa).

An N-terminal signal peptide occupies residues 1–21 (MRLLLWVLLVTLVTFLSSGDA). The short motif at 54–75 (RFLRGDRSNIVNLKDGDENEER) is the RxLR-dEER element.

The protein belongs to the RxLR effector family.

The protein resides in the secreted. The protein localises to the host cell. Secreted effector that completely suppresses elicitor-induced cell death in host and enhances virulence of P.parasitica. In Phytophthora nicotianae (Potato buckeye rot agent), this protein is Secreted RxLR effector protein 2.